Here is a 398-residue protein sequence, read N- to C-terminus: ATP-dependent RNA helicase RhlB (398 aa).

Residues 9–37 (TRFHDFKLSNELMHAIHDLGFPYCTPIQA) carry the Q motif motif. Positions 40 to 220 (LGYTLRGQDA…KQWTTNPAIV (181 aa)) constitute a Helicase ATP-binding domain. 53–60 (AQTGTGKT) contacts ATP. The DEAD box motif lies at 166 to 169 (DEAD). The Helicase C-terminal domain maps to 243-393 (DKYKLLYNLV…MPPDELLKPV (151 aa)).

Belongs to the DEAD box helicase family. RhlB subfamily. Component of the RNA degradosome, which is a multiprotein complex involved in RNA processing and mRNA degradation.

It is found in the cytoplasm. The enzyme catalyses ATP + H2O = ADP + phosphate + H(+). Functionally, DEAD-box RNA helicase involved in RNA degradation. Has RNA-dependent ATPase activity and unwinds double-stranded RNA. In Pseudomonas putida (strain ATCC 47054 / DSM 6125 / CFBP 8728 / NCIMB 11950 / KT2440), this protein is ATP-dependent RNA helicase RhlB.